The sequence spans 530 residues: Chaperonin GroEL, chloroplastic (530 aa).

ATP-binding positions include threonine 29–proline 32, aspartate 86–threonine 90, glycine 414, aspartate 480–leucine 482, and aspartate 496.

Belongs to the chaperonin (HSP60) family. As to quaternary structure, forms a cylinder of 14 subunits composed of two heptameric rings stacked back-to-back. Interacts with the co-chaperonin GroES.

The protein localises to the plastid. It localises to the chloroplast. It carries out the reaction ATP + H2O + a folded polypeptide = ADP + phosphate + an unfolded polypeptide.. Together with its co-chaperonin GroES, plays an essential role in assisting protein folding. The GroEL-GroES system forms a nano-cage that allows encapsulation of the non-native substrate proteins and provides a physical environment optimized to promote and accelerate protein folding. The polypeptide is Chaperonin GroEL, chloroplastic (Cyanidium caldarium (Red alga)).